We begin with the raw amino-acid sequence, 321 residues long: Phospho-N-acetylmuramoyl-pentapeptide-transferase (321 aa).

A run of 10 helical transmembrane segments spans residues 1-21 (MVYL…PVLI), 50-70 (MGGL…IIFI), 76-96 (IILL…DDYI), 112-132 (FLAQ…FNLT), 140-160 (IPFI…IVFW), 173-193 (GLDG…AIMA), 198-218 (ATSI…FLPF), 225-245 (VFMG…ISIM), 250-270 (LSLL…MIQV), and 300-320 (VVTV…WIGV).

The protein belongs to the glycosyltransferase 4 family. MraY subfamily. Mg(2+) is required as a cofactor.

It is found in the cell membrane. The enzyme catalyses UDP-N-acetyl-alpha-D-muramoyl-L-alanyl-gamma-D-glutamyl-L-lysyl-D-alanyl-D-alanine + di-trans,octa-cis-undecaprenyl phosphate = Mur2Ac(oyl-L-Ala-gamma-D-Glu-L-Lys-D-Ala-D-Ala)-di-trans,octa-cis-undecaprenyl diphosphate + UMP. It participates in cell wall biogenesis; peptidoglycan biosynthesis. In terms of biological role, catalyzes the initial step of the lipid cycle reactions in the biosynthesis of the cell wall peptidoglycan: transfers peptidoglycan precursor phospho-MurNAc-pentapeptide from UDP-MurNAc-pentapeptide onto the lipid carrier undecaprenyl phosphate, yielding undecaprenyl-pyrophosphoryl-MurNAc-pentapeptide, known as lipid I. The protein is Phospho-N-acetylmuramoyl-pentapeptide-transferase of Staphylococcus saprophyticus subsp. saprophyticus (strain ATCC 15305 / DSM 20229 / NCIMB 8711 / NCTC 7292 / S-41).